Reading from the N-terminus, the 360-residue chain is Peptide chain release factor 1 (360 aa).

Gln235 carries the N5-methylglutamine modification. The span at Glu281–Arg307 shows a compositional bias: basic and acidic residues. The tract at residues Glu281–Phe311 is disordered.

It belongs to the prokaryotic/mitochondrial release factor family. Post-translationally, methylated by PrmC. Methylation increases the termination efficiency of RF1.

Its subcellular location is the cytoplasm. Peptide chain release factor 1 directs the termination of translation in response to the peptide chain termination codons UAG and UAA. This Rhizobium meliloti (strain 1021) (Ensifer meliloti) protein is Peptide chain release factor 1.